The following is a 122-amino-acid chain: Large ribosomal subunit protein bL12 (122 aa).

This sequence belongs to the bacterial ribosomal protein bL12 family. As to quaternary structure, homodimer. Part of the ribosomal stalk of the 50S ribosomal subunit. Forms a multimeric L10(L12)X complex, where L10 forms an elongated spine to which 2 to 4 L12 dimers bind in a sequential fashion. Binds GTP-bound translation factors.

Functionally, forms part of the ribosomal stalk which helps the ribosome interact with GTP-bound translation factors. Is thus essential for accurate translation. This Flavobacterium psychrophilum (strain ATCC 49511 / DSM 21280 / CIP 103535 / JIP02/86) protein is Large ribosomal subunit protein bL12.